Reading from the N-terminus, the 670-residue chain is Amyloid beta A4 precursor protein-binding family B member 1-interacting protein (670 aa).

Serine 55 is modified (phosphoserine). One can recognise a Ras-associating domain in the interval 179–266; sequence KKLVVKVHMD…KVLFLEKEER (88 aa). Residues 313 to 422 enclose the PH domain; that stretch reads VPELEGALYL…WVMGIRIAKY (110 aa). Residues 449-653 form a disordered region; that stretch reads VGTPMPAQPS…PGAPGNSEQD (205 aa). Residues 456–475 are compositionally biased toward polar residues; that stretch reads QPSTVSSGLKTGTSQPNGQM. Serine 532 carries the post-translational modification Phosphoserine. A Phosphothreonine modification is found at threonine 534. The residue at position 537 (serine 537) is a Phosphoserine. Composition is skewed to pro residues over residues 553-567, 576-599, 606-615, and 625-634; these read PHPP…PPPP, LPPP…PPPA, LPPPPPPPPC, and PLPPKKPLVP.

Belongs to the MRL family. In terms of assembly, interacts, through the N-terminal Pro-rich region, with the WW domain of APBB1. Interacts with RAP1A, PFN1, VASP and ENAH. As to expression, ubiquitously expressed with high expression in the hematopoietic system.

The protein resides in the cell membrane. It is found in the cell projection. The protein localises to the lamellipodium. Its subcellular location is the cell junction. It localises to the focal adhesion. The protein resides in the cytoplasm. It is found in the cytoskeleton. Appears to function in the signal transduction from Ras activation to actin cytoskeletal remodeling. Suppresses insulin-induced promoter activities through AP1 and SRE. Mediates Rap1-induced adhesion. The sequence is that of Amyloid beta A4 precursor protein-binding family B member 1-interacting protein (Apbb1ip) from Mus musculus (Mouse).